The following is a 382-amino-acid chain: uncharacterized protein (382 aa).

12 helical membrane passes run 8–28, 45–65, 75–95, 102–122, 131–151, 157–177, 204–224, 231–251, 270–290, 291–311, 325–345, and 349–369; these read VMLL…LNTL, MVSS…GYLI, YLAS…VGFW, FIAG…LMCS, LLAA…LLVS, LLHV…PLLF, LGVN…GLMP, GMAN…GILG, VQVF…AMAP, ALFI…AWAC, ALLL…AMLM, and SDNL…LMLL.

It belongs to the major facilitator superfamily. YcaD (TC 2.A.1.26) family.

It is found in the cell inner membrane. This is an uncharacterized protein from Salmonella agona (strain SL483).